The primary structure comprises 427 residues: Putative FBD-associated F-box protein At3g50710 (427 aa).

The F-box domain occupies 1–53 (MDRISNLSDDLLLKIVSSLPTKDVVVTMLLSKRWKFLWMMVPKLRFDDEFELE). Residues 345-395 (HWEEPSSVPQCLLFHLNIFEWKYYNAGDEEKKVVAYILKNARQLKTATFSA) enclose the FBD domain.

In Arabidopsis thaliana (Mouse-ear cress), this protein is Putative FBD-associated F-box protein At3g50710.